The chain runs to 140 residues: HTH-type transcriptional regulator LysM (140 aa).

Residues 4–67 (VDESDLKILE…ELENEIRAIV (64 aa)) form the HTH asnC-type domain. The H-T-H motif DNA-binding region spans 23–42 (YTSIAKELKISEAAVRKRIE).

In terms of assembly, homotetramer.

The protein resides in the cytoplasm. It functions in the pathway amino-acid biosynthesis; L-lysine biosynthesis via AAA pathway [regulation]. Its function is as follows. In the absence or at low concentrations of lysine, activates the biosynthesis of this amino acid via the alpha-aminoadipate (AAA) pathway. The polypeptide is HTH-type transcriptional regulator LysM (lysM) (Sulfurisphaera tokodaii (strain DSM 16993 / JCM 10545 / NBRC 100140 / 7) (Sulfolobus tokodaii)).